A 400-amino-acid polypeptide reads, in one-letter code: CCA-adding enzyme (400 aa).

ATP-binding residues include glycine 28 and arginine 31. CTP-binding residues include glycine 28 and arginine 31. Mg(2+) contacts are provided by aspartate 41 and aspartate 43. Residues arginine 112, aspartate 155, arginine 158, arginine 161, and arginine 164 each contribute to the ATP site. CTP contacts are provided by arginine 112, aspartate 155, arginine 158, arginine 161, and arginine 164.

The protein belongs to the tRNA nucleotidyltransferase/poly(A) polymerase family. Bacterial CCA-adding enzyme type 3 subfamily. As to quaternary structure, homodimer. Requires Mg(2+) as cofactor.

It catalyses the reaction a tRNA precursor + 2 CTP + ATP = a tRNA with a 3' CCA end + 3 diphosphate. It carries out the reaction a tRNA with a 3' CCA end + 2 CTP + ATP = a tRNA with a 3' CCACCA end + 3 diphosphate. Functionally, catalyzes the addition and repair of the essential 3'-terminal CCA sequence in tRNAs without using a nucleic acid template. Adds these three nucleotides in the order of C, C, and A to the tRNA nucleotide-73, using CTP and ATP as substrates and producing inorganic pyrophosphate. tRNA 3'-terminal CCA addition is required both for tRNA processing and repair. Also involved in tRNA surveillance by mediating tandem CCA addition to generate a CCACCA at the 3' terminus of unstable tRNAs. While stable tRNAs receive only 3'-terminal CCA, unstable tRNAs are marked with CCACCA and rapidly degraded. The polypeptide is CCA-adding enzyme (Staphylococcus aureus (strain bovine RF122 / ET3-1)).